Here is a 467-residue protein sequence, read N- to C-terminus: Asparagine--tRNA ligase (467 aa).

It belongs to the class-II aminoacyl-tRNA synthetase family. In terms of assembly, homodimer.

It is found in the cytoplasm. It carries out the reaction tRNA(Asn) + L-asparagine + ATP = L-asparaginyl-tRNA(Asn) + AMP + diphosphate + H(+). In Haemophilus ducreyi (strain 35000HP / ATCC 700724), this protein is Asparagine--tRNA ligase.